We begin with the raw amino-acid sequence, 267 residues long: Imidazole glycerol phosphate synthase subunit HisF (267 aa).

Residues Asp-22 and Asp-141 contribute to the active site.

The protein belongs to the HisA/HisF family. In terms of assembly, heterodimer of HisH and HisF.

The protein localises to the cytoplasm. It catalyses the reaction 5-[(5-phospho-1-deoxy-D-ribulos-1-ylimino)methylamino]-1-(5-phospho-beta-D-ribosyl)imidazole-4-carboxamide + L-glutamine = D-erythro-1-(imidazol-4-yl)glycerol 3-phosphate + 5-amino-1-(5-phospho-beta-D-ribosyl)imidazole-4-carboxamide + L-glutamate + H(+). Its pathway is amino-acid biosynthesis; L-histidine biosynthesis; L-histidine from 5-phospho-alpha-D-ribose 1-diphosphate: step 5/9. Its function is as follows. IGPS catalyzes the conversion of PRFAR and glutamine to IGP, AICAR and glutamate. The HisF subunit catalyzes the cyclization activity that produces IGP and AICAR from PRFAR using the ammonia provided by the HisH subunit. This Mycobacterium bovis (strain ATCC BAA-935 / AF2122/97) protein is Imidazole glycerol phosphate synthase subunit HisF.